A 91-amino-acid chain; its full sequence is Potassium channel toxin MeuTXK-beta-2 (91 aa).

A signal peptide spans 1-19; the sequence is MQRNLVVLLFLGMVALSSC. Residues 54 to 91 enclose the BetaSPN-type CS-alpha/beta domain; the sequence is QFGCSAYQGYCDDHCQDIEKKEGFCHGFKCKCGIPMGF. Intrachain disulfides connect cysteine 57–cysteine 78, cysteine 64–cysteine 83, and cysteine 68–cysteine 85.

Belongs to the long chain scorpion toxin family. Class 1 subfamily. Expressed by the venom gland.

The protein resides in the secreted. Its function is as follows. Has a low affinity binding to potassium channels of rat brain synaptosomes. Displays weak antibacterial activity against Stenotrophomonas sp. Strongly inhibits the development of the Plasmodium berghei ookinetes. Displays slight hemolytic effect on mouse erythrocytes. Induces cytolysis on Xenopus oocytes at high concentrations. Is not toxic towards mice and towards the insect Tenebrio molitor. The chain is Potassium channel toxin MeuTXK-beta-2 from Mesobuthus eupeus (Lesser Asian scorpion).